A 354-amino-acid chain; its full sequence is CREB/ATF bZIP transcription factor (354 aa).

Disordered stretches follow at residues 1–95, 113–156, and 171–214; these read MRHS…PGEE, PRQP…AAEM, and GGCS…RKAA. At Ser50 the chain carries Phosphoserine. Over residues 121–132 the composition is skewed to low complexity; the sequence is DPGLSSPGPLSS. Gly residues-rich tracts occupy residues 133-143 and 190-199; these read SGGGSDSGGLW and PGGGGGGGSG. In terms of domain architecture, bZIP spans 204–267; the sequence is QAATKSPRKA…QALQEESRYL (64 aa). The span at 205–214 shows a compositional bias: low complexity; sequence AATKSPRKAA. A basic motif region spans residues 219–226; sequence RLNRLKKK. Residues 232–267 are leucine-zipper; that stretch reads LESRVRGLAAENQELRAENRELGKRVQALQEESRYL. The HCFC1-binding motif (HBM) motif lies at 303–306; sequence DHDY.

The protein belongs to the bZIP family. ATF subfamily. Interacts with HCFC1; the interaction inhibits CREB3 transcriptional activity. Interacts with CREB3; the interaction occurs only in combination with HCFC1. As to expression, in adults, expressed most abundantly in heart, liver and skeletal muscle, moderately abundant in kidney and pancreas, and barely detectable in lung. In fetal tissues, expressed most abundantly in kidney and very low amounts in heart, lung and liver.

The protein localises to the nucleus. Functionally, strongly activates transcription when bound to HCFC1. Suppresses the expression of HSV proteins in cells infected with the virus in a HCFC1-dependent manner. Also suppresses the HCFC1-dependent transcriptional activation by CREB3 and reduces the amount of CREB3 in the cell. Able to down-regulate expression of some cellular genes in CREBZF-expressing cells. This chain is CREB/ATF bZIP transcription factor (CREBZF), found in Homo sapiens (Human).